A 215-amino-acid chain; its full sequence is RNA pyrophosphohydrolase (215 aa).

The Nudix hydrolase domain occupies G6–T149. Residues G38–G59 carry the Nudix box motif.

This sequence belongs to the Nudix hydrolase family. RppH subfamily. The cofactor is a divalent metal cation.

Its function is as follows. Accelerates the degradation of transcripts by removing pyrophosphate from the 5'-end of triphosphorylated RNA, leading to a more labile monophosphorylated state that can stimulate subsequent ribonuclease cleavage. In Burkholderia multivorans (strain ATCC 17616 / 249), this protein is RNA pyrophosphohydrolase.